The primary structure comprises 335 residues: Methionine import ATP-binding protein MetN (335 aa).

The ABC transporter domain occupies 2-241 (IQFKDSYKHY…PQHPTTRSFV (240 aa)). ATP is bound at residue 38 to 45 (GHSGAGKS).

This sequence belongs to the ABC transporter superfamily. Methionine importer (TC 3.A.1.24) family. As to quaternary structure, the complex is composed of two ATP-binding proteins (MetN), two transmembrane proteins (MetI) and a solute-binding protein (MetQ).

Its subcellular location is the cell inner membrane. It catalyses the reaction L-methionine(out) + ATP + H2O = L-methionine(in) + ADP + phosphate + H(+). It carries out the reaction D-methionine(out) + ATP + H2O = D-methionine(in) + ADP + phosphate + H(+). Its function is as follows. Part of the ABC transporter complex MetNIQ involved in methionine import. Responsible for energy coupling to the transport system. This chain is Methionine import ATP-binding protein MetN, found in Xylella fastidiosa (strain Temecula1 / ATCC 700964).